A 360-amino-acid polypeptide reads, in one-letter code: Membrane-bound lytic murein transglycosylase C (360 aa).

An N-terminal signal peptide occupies residues 1-16; the sequence is MKKIFALALIAPLLIS. Cys17 carries the N-palmitoyl cysteine lipid modification. Residue Cys17 is the site of S-diacylglycerol cysteine attachment.

The protein belongs to the transglycosylase Slt family.

It localises to the cell outer membrane. The catalysed reaction is Exolytic cleavage of the (1-&gt;4)-beta-glycosidic linkage between N-acetylmuramic acid (MurNAc) and N-acetylglucosamine (GlcNAc) residues in peptidoglycan, from either the reducing or the non-reducing ends of the peptidoglycan chains, with concomitant formation of a 1,6-anhydrobond in the MurNAc residue.. Functionally, murein-degrading enzyme. May play a role in recycling of muropeptides during cell elongation and/or cell division. This is Membrane-bound lytic murein transglycosylase C from Cronobacter sakazakii (strain ATCC BAA-894) (Enterobacter sakazakii).